The chain runs to 248 residues: Cyclo(L-leucyl-L-leucyl) synthase (248 aa).

Catalysis depends on Ser37, which acts as the Nucleophile. Residues Asn40, 180–184 (YVIAE), Tyr204, and 209–210 (KL) each bind substrate.

This sequence belongs to the CDPS family. As to quaternary structure, monomer.

It catalyses the reaction 2 L-leucyl-tRNA(Leu) = cyclo(L-leucyl-L-leucyl) + 2 tRNA(Leu) + 2 H(+). In terms of biological role, involved in the biosynthesis of pulcherrimin, a red extracellular pigment. It uses activated amino acids in the form of aminoacyl-tRNAs (aa-tRNAs) as substrates to catalyze the ATP-independent formation of cyclodipeptides which are intermediates in diketopiperazine (DKP) biosynthetic pathways. Catalyzes the formation of cyclo(L-Leu-L-Leu) (cLL) from L-leucyl-tRNA(Leu). Can also incorporate various nonpolar residues, such as L-phenylalanine, L-leucine and methionine, into cyclodipeptides. In Bacillus subtilis (strain 168), this protein is Cyclo(L-leucyl-L-leucyl) synthase (yvmC).